A 40-amino-acid chain; its full sequence is Amyloid-beta precursor protein (40 aa).

The protein belongs to the APP family. In terms of assembly, binds, via its C-terminus, to the PID domain of several cytoplasmic proteins, including APBB family members, the APBA family, MAPK8IP1, SHC1 and NUMB and DAB1. Binding to DAB1 inhibits its serine phosphorylation. Interacts (via NPXY motif) with DAB2 (via PID domain); the interaction is impaired by tyrosine phosphorylation of the NPXY motif. Also interacts with GPCR-like protein BPP, APPBP1, IB1, KNS2 (via its TPR domains), APPBP2 (via BaSS) and DDB1. In vitro, it binds MAPT via the MT-binding domains. Associates with microtubules in the presence of ATP and in a kinesin-dependent manner. Interacts, through a C-terminal domain, with GNAO1. Interacts with CPEB1, ANKS1B and AGER. Interacts with ITM2B. Interacts with ITM2C. Interacts with IDE. Can form homodimers; dimerization is enhanced in the presence of Cu(2+) ions. Can form homodimers; this is promoted by heparin binding. Interacts with SORL1 (via N-terminal ectodomain); this interaction retains APP in the trans-Golgi network and reduces processing into soluble APP-alpha and amyloid-beta peptides. Interacts with PLD3. Interacts with VDAC1. Interacts with NSG1; could regulate APP processing. Interacts with LRRK2. Interacts (via cytoplasmic domain) with KIF5B. Interacts (via C-terminus) with APBB2/FE65L1 (via C-terminus). Interacts (via intracellular domain) with APBB3. Proteolytically processed under normal cellular conditions. Cleavage either by alpha-secretase, beta-secretase or theta-secretase leads to generation and extracellular release of soluble APP peptides, S-APP-alpha and S-APP-beta, and the retention of corresponding membrane-anchored C-terminal fragments, C80, C83 and C99. Subsequent processing of C80 and C83 by gamma-secretase yields P3 peptides. This is the major secretory pathway and is non-amyloidogenic. Alternatively, presenilin/nicastrin-mediated gamma-secretase processing of C99 releases the amyloid-beta proteins, amyloid-beta protein 40 and amyloid-beta protein 42, major components of amyloid plaques, and the cytotoxic C-terminal fragments, gamma-CTF(50), gamma-CTF(57) and gamma-CTF(59). PSEN1 cleavage is more efficient with C83 than with C99 as substrate (in vitro). Amyloid-beta protein 40 and Amyloid-beta protein 42 are cleaved by ACE. Many other minor amyloid-beta peptides, amyloid-beta 1-X peptides, are found in cerebral spinal fluid (CSF) including the amyloid-beta X-15 peptides, produced from the cleavage by alpha-secretase.

The protein localises to the cell membrane. Its subcellular location is the membrane. The protein resides in the perikaryon. It is found in the cell projection. It localises to the growth cone. The protein localises to the clathrin-coated pit. Its subcellular location is the early endosome. The protein resides in the cytoplasmic vesicle. Functions as a cell surface receptor and performs physiological functions on the surface of neurons relevant to neurite growth, neuronal adhesion and axonogenesis. Interaction between APP molecules on neighboring cells promotes synaptogenesis. Involved in cell mobility and transcription regulation through protein-protein interactions. Can promote transcription activation through binding to APBB1-KAT5 and inhibit Notch signaling through interaction with Numb. Couples to apoptosis-inducing pathways such as those mediated by G(o) and JIP. Inhibits G(o)-alpha ATPase activity. Acts as a kinesin I membrane receptor, mediating the axonal transport of beta-secretase and presenilin 1. May be involved in copper homeostasis/oxidative stress through copper ion reduction. In vitro, copper-metallated APP induces neuronal death directly or is potentiated through Cu(2+)-mediated low-density lipoprotein oxidation. Can regulate neurite outgrowth through binding to components of the extracellular matrix such as heparin and collagen I and IV. Induces a AGER-dependent pathway that involves activation of p38 MAPK, resulting in internalization of amyloid-beta peptide and mitochondrial dysfunction in cultured cortical neurons. Provides Cu(2+) ions for GPC1 which are required for release of nitric oxide (NO) and subsequent degradation of the heparan sulfate chains on GPC1. The protein is Amyloid-beta precursor protein of Felis catus (Cat).